The sequence spans 217 residues: Adenylate kinase (217 aa).

10–15 (GAGKGT) is a binding site for ATP. An NMP region spans residues 30 to 59 (STGDMLRAQIKAGTELGMKAKAIMDAGGLV). Residues Thr31, Arg36, 57–59 (GLV), 85–88 (GFPR), and Gln92 each bind AMP. The tract at residues 122–159 (GRRVHVASGRTYHVVFNPPKVAGKDDVTGEDLIQRDDD) is LID. Residues Arg123 and 132–133 (TY) contribute to the ATP site. AMP is bound by residues Arg156 and Arg167. Gly203 contacts ATP.

This sequence belongs to the adenylate kinase family. As to quaternary structure, monomer.

It is found in the cytoplasm. The catalysed reaction is AMP + ATP = 2 ADP. The protein operates within purine metabolism; AMP biosynthesis via salvage pathway; AMP from ADP: step 1/1. Catalyzes the reversible transfer of the terminal phosphate group between ATP and AMP. Plays an important role in cellular energy homeostasis and in adenine nucleotide metabolism. The chain is Adenylate kinase from Thiobacillus denitrificans (strain ATCC 25259 / T1).